Reading from the N-terminus, the 229-residue chain is uncharacterized protein (229 aa).

22 to 29 (GMIAFGKT) provides a ligand contact to ATP.

This is an uncharacterized protein from Mycoplasma pneumoniae (strain ATCC 29342 / M129 / Subtype 1) (Mycoplasmoides pneumoniae).